The following is a 362-amino-acid chain: Ferredoxin--NADP reductase, leaf isozyme 1, chloroplastic (362 aa).

Residues 1–62 (MAAVTAAAVS…DAAAVAAAPA (62 aa)) constitute a chloroplast transit peptide. Residues 83 to 205 (KEPYVGKCLL…TGPVGKEMLM (123 aa)) enclose the FAD-binding FR-type domain. FAD contacts are provided by residues 141–144 (RLYS), 162–164 (CVK), Tyr168, 179–181 (VCS), and Thr220. 2 residues coordinate NADP(+): Ser144 and Lys164. Cys180 and Cys185 are disulfide-bonded. Ser181 carries the post-translational modification Phosphoserine. NADP(+) contacts are provided by residues Thr220, 252-253 (VP), 282-283 (SR), Lys292, 321-322 (GL), and Glu360.

It belongs to the ferredoxin--NADP reductase type 1 family. As to quaternary structure, component of high molecular weight thylakoid LFNRs-containing protein complexes containing LIR1, LFNR1, LFNR2, TIC62 and TROL proteins. Interacts directly with LIR1 and TIC62; LIR1 increases the affinity of LFNR1 and LFNR2 for TIC62. The cofactor is FAD. In terms of processing, may form interchain disulfide bonds with LIR1.

Its subcellular location is the plastid. It localises to the chloroplast stroma. It is found in the chloroplast thylakoid membrane. It carries out the reaction 2 reduced [2Fe-2S]-[ferredoxin] + NADP(+) + H(+) = 2 oxidized [2Fe-2S]-[ferredoxin] + NADPH. It participates in energy metabolism; photosynthesis. May play a key role in regulating the relative amounts of cyclic and non-cyclic electron flow to meet the demands of the plant for ATP and reducing power. The protein is Ferredoxin--NADP reductase, leaf isozyme 1, chloroplastic of Oryza sativa subsp. japonica (Rice).